Reading from the N-terminus, the 73-residue chain is Neutrophil elastase 2B (73 aa).

The region spanning 1–73 (IVGGRPARPH…SGGPLVCNGL (73 aa)) is the Peptidase S1 domain. Ser-64 (charge relay system) is an active-site residue.

It belongs to the peptidase S1 family. Elastase subfamily.

Functionally, may be involved in the degradation of connective tissue in chronic lung disease. The protein is Neutrophil elastase 2B of Equus caballus (Horse).